The following is a 65-amino-acid chain: Neurotoxin BmK AGAP-SYPU2 (65 aa).

The LCN-type CS-alpha/beta domain maps to 2-64 (KDGYIVDDKN…VPIRVPGRCN (63 aa)). 4 disulfides stabilise this stretch: Cys12–Cys63, Cys16–Cys36, Cys22–Cys46, and Cys26–Cys48.

Expressed by the venom gland.

It is found in the secreted. Its function is as follows. Alpha toxins bind voltage-independently at site-3 of sodium channels and inhibit the inactivation of the activated channels, thereby blocking neuronal transmission. In vivo, shows analgesic activity (ED(50) is 1.42 mg/kg) and antitumor activity against Ehrlich ascites tumor and S-180 fibrosarcoma models. This Olivierus martensii (Manchurian scorpion) protein is Neurotoxin BmK AGAP-SYPU2.